The chain runs to 285 residues: MTATLIDGNALSKTLRAQAAERAAALAARGHRPGLAVILVGDNPASEVYVRNKIKACEDNGFFSLKDRYPATLSEPELLARIDELNRDPKIHGILVQLPLPAHIDSHKVIEAIAPEKDVDGFHVANAGALLTGKPLFRPCTPYGVMKMFEAYKIPLQGANAVVIGRSNIVGKPMALLLLEAGATVTICHSKTCELAAHTRAADIVVAAVGKRNVLTADMVKPGATVIDVGMNRNDEGKLCGDVDFAGVSQVAGHITPVPGGVGPMTITMLLVNTIEAAERAAAAA.

Residues G165–S167 and S190 each bind NADP(+).

Belongs to the tetrahydrofolate dehydrogenase/cyclohydrolase family. In terms of assembly, homodimer.

It carries out the reaction (6R)-5,10-methylene-5,6,7,8-tetrahydrofolate + NADP(+) = (6R)-5,10-methenyltetrahydrofolate + NADPH. It catalyses the reaction (6R)-5,10-methenyltetrahydrofolate + H2O = (6R)-10-formyltetrahydrofolate + H(+). It functions in the pathway one-carbon metabolism; tetrahydrofolate interconversion. Its function is as follows. Catalyzes the oxidation of 5,10-methylenetetrahydrofolate to 5,10-methenyltetrahydrofolate and then the hydrolysis of 5,10-methenyltetrahydrofolate to 10-formyltetrahydrofolate. The protein is Bifunctional protein FolD of Burkholderia mallei (strain NCTC 10247).